A 516-amino-acid polypeptide reads, in one-letter code: 2-isopropylmalate synthase (516 aa).

In terms of domain architecture, Pyruvate carboxyltransferase spans 8–270; the sequence is IYIFDTTLRD…YTGIKTESIY (263 aa). Mn(2+) contacts are provided by D17, H205, H207, and N241. The interval 394-516 is regulatory domain; that stretch reads KLIYLNVVSG…DAGKIKSEYE (123 aa).

The protein belongs to the alpha-IPM synthase/homocitrate synthase family. LeuA type 1 subfamily. As to quaternary structure, homodimer. It depends on Mn(2+) as a cofactor.

Its subcellular location is the cytoplasm. The enzyme catalyses 3-methyl-2-oxobutanoate + acetyl-CoA + H2O = (2S)-2-isopropylmalate + CoA + H(+). It participates in amino-acid biosynthesis; L-leucine biosynthesis; L-leucine from 3-methyl-2-oxobutanoate: step 1/4. Functionally, catalyzes the condensation of the acetyl group of acetyl-CoA with 3-methyl-2-oxobutanoate (2-ketoisovalerate) to form 3-carboxy-3-hydroxy-4-methylpentanoate (2-isopropylmalate). The chain is 2-isopropylmalate synthase from Syntrophus aciditrophicus (strain SB).